A 236-amino-acid polypeptide reads, in one-letter code: Bidirectional sugar transporter SWEET2 (236 aa).

Over 1-15 (MDVFAFNASLSMCKD) the chain is Extracellular. N-linked (GlcNAc...) asparagine glycosylation occurs at N7. The helical transmembrane segment at 16 to 36 (VAGIAGNIFAFGLFVSPMPTF) threads the bilayer. Residues 18 to 103 (GIAGNIFAFG…ILFIMHTDKK (86 aa)) enclose the MtN3/slv 1 domain. At 37–50 (RRIMRNKSTEQFSG) the chain is on the cytoplasmic side. A helical transmembrane segment spans residues 51–71 (LPYIYALLNCLICLWYGTPFI). Over 72–76 (SHSNA) the chain is Extracellular. A helical membrane pass occupies residues 77–97 (MLMTVNSVGATFQLCYIILFI). Residues 98–108 (MHTDKKNKMKM) are Cytoplasmic-facing. Residues 109-129 (LGLLFVVFAVVGVIVAGSLQI) form a helical membrane-spanning segment. Residues 130–137 (PDQLTRWY) are Extracellular-facing. Residues 138–158 (FVGFLSCGSLVSMFASPLFVI) form a helical membrane-spanning segment. Positions 138 to 221 (FVGFLSCGSL…LALYCYYHRN (84 aa)) constitute a MtN3/slv 2 domain. Residues 159–170 (NLVIRTKSVEFM) lie on the Cytoplasmic side of the membrane. The chain crosses the membrane as a helical span at residues 171-191 (PFYLSLSTFLMSASFLLYGLF). Residues 192–194 (NSD) are Extracellular-facing. Residues 195–215 (AFVYTPNGIGTILGIVQLALY) traverse the membrane as a helical segment. Residues 216–236 (CYYHRNSIEEETKEPLIVSYV) lie on the Cytoplasmic side of the membrane.

The protein belongs to the SWEET sugar transporter family. Forms heterooligomers with SWEET17.

The protein resides in the cell membrane. Mediates both low-affinity uptake and efflux of sugar across the plasma membrane. This chain is Bidirectional sugar transporter SWEET2, found in Arabidopsis thaliana (Mouse-ear cress).